We begin with the raw amino-acid sequence, 365 residues long: Sulfate/thiosulfate import ATP-binding protein CysA (365 aa).

One can recognise an ABC transporter domain in the interval 3 to 237 (IEIANIKKSF…PATRFVLEFM (235 aa)). ATP is bound at residue 35 to 42 (GPSGSGKT).

This sequence belongs to the ABC transporter superfamily. Sulfate/tungstate importer (TC 3.A.1.6) family. In terms of assembly, the complex is composed of two ATP-binding proteins (CysA), two transmembrane proteins (CysT and CysW) and a solute-binding protein (CysP).

It localises to the cell inner membrane. It carries out the reaction sulfate(out) + ATP + H2O = sulfate(in) + ADP + phosphate + H(+). The enzyme catalyses thiosulfate(out) + ATP + H2O = thiosulfate(in) + ADP + phosphate + H(+). Part of the ABC transporter complex CysAWTP involved in sulfate/thiosulfate import. Responsible for energy coupling to the transport system. The polypeptide is Sulfate/thiosulfate import ATP-binding protein CysA (Escherichia coli O6:H1 (strain CFT073 / ATCC 700928 / UPEC)).